The primary structure comprises 52 residues: ATP synthase protein 8 (52 aa).

A helical transmembrane segment spans residues 10–30 (FLMSLMIMMILIFMTINFYFF).

It belongs to the ATPase protein 8 family. As to quaternary structure, F-type ATPases have 2 components, CF(1) - the catalytic core - and CF(0) - the membrane proton channel.

It localises to the mitochondrion membrane. In terms of biological role, mitochondrial membrane ATP synthase (F(1)F(0) ATP synthase or Complex V) produces ATP from ADP in the presence of a proton gradient across the membrane which is generated by electron transport complexes of the respiratory chain. F-type ATPases consist of two structural domains, F(1) - containing the extramembraneous catalytic core and F(0) - containing the membrane proton channel, linked together by a central stalk and a peripheral stalk. During catalysis, ATP synthesis in the catalytic domain of F(1) is coupled via a rotary mechanism of the central stalk subunits to proton translocation. Part of the complex F(0) domain. Minor subunit located with subunit a in the membrane. The chain is ATP synthase protein 8 (MT-ATP8) from Rhipicephalus sanguineus (Brown dog tick).